Here is a 270-residue protein sequence, read N- to C-terminus: (+)-cis,cis-nepetalactol synthase NEPS3 (270 aa).

Residues 21–27 (GGASGIG), 46–48 (DIQ), 70–71 (DV), asparagine 97, 165–169 (YVMSK), and 198–202 (VATPL) contribute to the NAD(+) site.

This sequence belongs to the short-chain dehydrogenases/reductases (SDR) family. Forms homotetramers.

It carries out the reaction (S)-8-oxocitronellyl enol = cis-cis-nepetalactol. Its function is as follows. Functions as a non-oxidoreductive cyclase to promote the formation of cis-cis-nepetalactol. Cis-cis-nepetalactol is then oxidized by NEPS1 into cis-cis-nepetalactone, which belongs to a family of metabolites that are both insect-repellent and have euphoric effect in cats. Binds NAD(+) as classical short-chain dehydrogenase/reductase (SDR), but does not utilize it for its redox-neutral cyclase activity. The protein is (+)-cis,cis-nepetalactol synthase NEPS3 of Nepeta racemosa (Catmint).